Consider the following 301-residue polypeptide: Probable alpha-L-glutamate ligase (301 aa).

In terms of domain architecture, ATP-grasp spans 104–287; it reads LQLLSRKGIG…VAGMIIQYLE (184 aa). ATP-binding positions include lysine 141, 178-179, aspartate 187, and 211-213; these read EY and RSN. Residues aspartate 248, glutamate 260, and asparagine 262 each coordinate Mg(2+). Mn(2+) contacts are provided by aspartate 248, glutamate 260, and asparagine 262.

Belongs to the RimK family. It depends on Mg(2+) as a cofactor. Mn(2+) serves as cofactor.

The sequence is that of Probable alpha-L-glutamate ligase from Ectopseudomonas mendocina (strain ymp) (Pseudomonas mendocina).